The sequence spans 541 residues: Tyrosine-protein phosphatase non-receptor type 5 (541 aa).

A disordered region spans residues 1 to 55 (MCCSERLLGLPQPVEMEAPDEAEGLPSKQKEMPPPPPPSPPSEPAQKLPPQGAGS). The span at 32–43 (MPPPPPPSPPSE) shows a compositional bias: pro residues. Transmembrane regions (helical) follow at residues 64 to 84 (LCLF…LSGH) and 122 to 142 (LLLV…WHLL). Ser221 is subject to Phosphoserine; by PKA. Thr231 is subject to Phosphothreonine; by MAPK. Ser244 carries the phosphoserine; by MAPK modification. The Tyrosine-protein phosphatase domain occupies 276 to 531 (LQAEFFEIPM…QFVHHAMSLY (256 aa)). Residues Asp437, 472-478 (CSAGIGR), and Gln516 contribute to the substrate site. The active-site Phosphocysteine intermediate is the Cys472.

This sequence belongs to the protein-tyrosine phosphatase family. Non-receptor class subfamily. Post-translationally, phosphorylation at Ser-221 by PKA deactivates PTPN5. Phosphorylation at Thr-231 and Ser-244 by MAPKs stabilizes the phosphatase, dephosphorylation of these sites results in ubiquitin-mediated degradation of the active phosphatase. As to expression, STEP20 is expressed only in the CNS.

The protein localises to the endoplasmic reticulum membrane. Its subcellular location is the cytoplasm. The catalysed reaction is O-phospho-L-tyrosyl-[protein] + H2O = L-tyrosyl-[protein] + phosphate. Functionally, may regulate the activity of several effector molecules involved in synaptic plasticity and neuronal cell survival, including MAPKs, Src family kinases and NMDA receptors. The polypeptide is Tyrosine-protein phosphatase non-receptor type 5 (Ptpn5) (Mus musculus (Mouse)).